The following is a 436-amino-acid chain: Putative F-box/FBD/LRR-repeat protein At5g44960 (436 aa).

An F-box domain is found at 4-50 (CDYINELPDSLLTQILLDLRTKDSVKTSVSSKRWRNLWLNVPGLDLF). LRR repeat units lie at residues 287 to 310 (ISSVRHMIISGSILEELHSYSKLG) and 397 to 420 (SAVLKKLTLRFSFFSSIESESYKK). The 53-residue stretch at 355–407 (EENIDFHEVPQCLISTLEYVHINKLMMMEQSGIKLVNYFIENSAVLKKLTLRF) folds into the FBD domain.

This is Putative F-box/FBD/LRR-repeat protein At5g44960 from Arabidopsis thaliana (Mouse-ear cress).